The following is a 484-amino-acid chain: Glutelin type-D 1 (484 aa).

Residues 1–27 form the signal peptide; it reads MATTTSLLSSCLCALLLAPLFSQGVDA. Intrachain disulfides connect Cys-38/Cys-71 and Cys-114/Cys-292. Cupin type-1 domains follow at residues 43–238 and 298–447; these read LQAF…EASK and VNIE…DEAR.

It belongs to the 11S seed storage protein (globulins) family. As to quaternary structure, hexamer; each subunit is composed of an acidic and a basic chain derived from a single precursor and linked by a disulfide bond.

Its subcellular location is the protein storage vacuole. Seed storage protein. The sequence is that of Glutelin type-D 1 from Oryza sativa subsp. japonica (Rice).